Here is an 811-residue protein sequence, read N- to C-terminus: Abnormal pharyngeal pumping eat-20 (811 aa).

The first 20 residues, 1–20, serve as a signal peptide directing secretion; the sequence is MTTFCRVLLIFGIYVAVSCA. At 21–749 the chain is on the extracellular side; sequence QSVEDDVFHF…GKQSSAVASW (729 aa). Residues Asn-90, Asn-171, and Asn-232 are each glycosylated (N-linked (GlcNAc...) asparagine). EGF-like domains are found at residues 220 to 257, 258 to 293, and 301 to 335; these read PPSP…DRCE, LDVC…LLCE, and AAPI…ANCN. Cystine bridges form between Cys-224–Cys-235, Cys-229–Cys-245, Cys-247–Cys-256, Cys-261–Cys-272, Cys-266–Cys-281, Cys-283–Cys-292, Cys-305–Cys-314, Cys-309–Cys-323, and Cys-325–Cys-334. N-linked (GlcNAc...) asparagine glycosylation occurs at Asn-371. 3 disordered regions span residues 544–579, 592–659, and 690–739; these read FVSP…QVAT, FPTT…AIST, and PHPQ…HTSS. Positions 551 to 567 are enriched in acidic residues; sequence DENEEEEEDETTDETEE. Polar residues predominate over residues 570–579; sequence PTPSTMQVAT. Residues 597 to 612 are compositionally biased toward acidic residues; it reads DMEETDEEEDMTEEVT. Low complexity predominate over residues 626-639; that stretch reads PSSTTFTTEAPTTT. 2 stretches are compositionally biased toward acidic residues: residues 640-655 and 705-717; these read MEEE…ESEE and IESE…ESNE. Residues 750-770 form a helical membrane-spanning segment; sequence IIATIALIVLGSLLLATSLFV. Topologically, residues 771–811 are cytoplasmic; the sequence is LRYIRQSRKLHGKYNPAREEHNLSAAYAMPMSHIAKEERLI.

The protein localises to the membrane. Its function is as follows. Regulates pharyngeal pumping during feeding. The polypeptide is Abnormal pharyngeal pumping eat-20 (eat-20) (Caenorhabditis briggsae).